The following is a 312-amino-acid chain: Acetyl-coenzyme A carboxylase carboxyl transferase subunit alpha (312 aa).

One can recognise a CoA carboxyltransferase C-terminal domain in the interval 36-286 (RLDKEVKSIY…KEYFLDALRT (251 aa)).

This sequence belongs to the AccA family. Acetyl-CoA carboxylase is a heterohexamer composed of biotin carboxyl carrier protein (AccB), biotin carboxylase (AccC) and two subunits each of ACCase subunit alpha (AccA) and ACCase subunit beta (AccD).

Its subcellular location is the cytoplasm. It catalyses the reaction N(6)-carboxybiotinyl-L-lysyl-[protein] + acetyl-CoA = N(6)-biotinyl-L-lysyl-[protein] + malonyl-CoA. The protein operates within lipid metabolism; malonyl-CoA biosynthesis; malonyl-CoA from acetyl-CoA: step 1/1. Component of the acetyl coenzyme A carboxylase (ACC) complex. First, biotin carboxylase catalyzes the carboxylation of biotin on its carrier protein (BCCP) and then the CO(2) group is transferred by the carboxyltransferase to acetyl-CoA to form malonyl-CoA. The polypeptide is Acetyl-coenzyme A carboxylase carboxyl transferase subunit alpha (Helicobacter pylori (strain Shi470)).